A 447-amino-acid chain; its full sequence is tRNA-2-methylthio-N(6)-dimethylallyladenosine synthase (447 aa).

In terms of domain architecture, MTTase N-terminal spans 3–120 (KKLYIKTNGC…LPALLNERLE (118 aa)). Residues Cys-12, Cys-49, Cys-83, Cys-157, Cys-161, and Cys-164 each coordinate [4Fe-4S] cluster. The Radical SAM core domain occupies 143–375 (RAEGPTAFVS…QNRLLMNAAR (233 aa)). Residues 378–441 (ESMIGSKQKI…PNSLRGRLLE (64 aa)) form the TRAM domain.

It belongs to the methylthiotransferase family. MiaB subfamily. As to quaternary structure, monomer. The cofactor is [4Fe-4S] cluster.

Its subcellular location is the cytoplasm. It carries out the reaction N(6)-dimethylallyladenosine(37) in tRNA + (sulfur carrier)-SH + AH2 + 2 S-adenosyl-L-methionine = 2-methylsulfanyl-N(6)-dimethylallyladenosine(37) in tRNA + (sulfur carrier)-H + 5'-deoxyadenosine + L-methionine + A + S-adenosyl-L-homocysteine + 2 H(+). Its function is as follows. Catalyzes the methylthiolation of N6-(dimethylallyl)adenosine (i(6)A), leading to the formation of 2-methylthio-N6-(dimethylallyl)adenosine (ms(2)i(6)A) at position 37 in tRNAs that read codons beginning with uridine. In Legionella pneumophila (strain Paris), this protein is tRNA-2-methylthio-N(6)-dimethylallyladenosine synthase.